We begin with the raw amino-acid sequence, 382 residues long: Mucosal addressin cell adhesion molecule 1 (382 aa).

The first 18 residues, 1 to 18 (MDFGLALLLAGLLGLLLG), serve as a signal peptide directing secretion. The Extracellular segment spans residues 19-317 (QSLQVKPLQV…TGSSKPAGDQ (299 aa)). Ig-like domains follow at residues 23 to 112 (VKPL…LLVY) and 113 to 231 (AFPD…TSPE). Disulfide bonds link C47–C94, C51–C98, and C134–C204. A glycan (N-linked (GlcNAc...) asparagine) is linked at N83. A disordered region spans residues 223–314 (VLHSPTSPEP…VIPTGSSKPA (92 aa)). The mucin-like stretch occupies residues 226-317 (SPTSPEPPDT…TGSSKPAGDQ (92 aa)). One copy of the 1; truncated repeat lies at 228–231 (TSPE). The 5.5 X 8 AA tandem repeats of [PS]-P-D-T-T-S-[QP]-E stretch occupies residues 228–271 (TSPEPPDTTSPESPDTTSPESPDTTSQEPPDTTSPEPPDKTSPE). 5 tandem repeats follow at residues 232-239 (PPDTTSPE), 240-247 (SPDTTSPE), 248-255 (SPDTTSQE), 256-263 (PPDTTSPE), and 264-271 (PPDKTSPE). The span at 236–261 (TSPESPDTTSPESPDTTSQEPPDTTS) shows a compositional bias: low complexity. Positions 277-288 (GSTHTPRSPGST) are enriched in low complexity. The chain crosses the membrane as a helical span at residues 318–338 (LPAALWTSSAVLGLLLLALPT). Residues 339 to 382 (YHLWKRCRHLAEDDTHPPASLRLLPQVSAWAGLRGTGQVGISPS) lie on the Cytoplasmic side of the membrane.

Homodimer. In terms of processing, the Ser/Thr-rich mucin-like domain may provide possible sites for O-glycosylation. As to expression, highly expressed on high endothelial venules (HEV) and lamina propia venules found in the small intestine, and to a lesser extent in the colon and spleen. Very low levels of expression found in pancreas and brain. Not expressed in the thymus, prostate, ovaries, testis, heart, placenta, lung, liver, skeletal muscle, kidney or peripheral blood leukocytes.

It localises to the membrane. Its function is as follows. Cell adhesion leukocyte receptor expressed by mucosal venules, helps to direct lymphocyte traffic into mucosal tissues including the Peyer patches and the intestinal lamina propria. It can bind both integrin alpha-4/beta-7 and L-selectin, regulating both the passage and retention of leukocytes. Isoform 2, lacking the mucin-like domain, may be specialized in supporting integrin alpha-4/beta-7-dependent adhesion strengthening, independent of L-selectin binding. The chain is Mucosal addressin cell adhesion molecule 1 (MADCAM1) from Homo sapiens (Human).